We begin with the raw amino-acid sequence, 197 residues long: Recombination protein RecR (197 aa).

The segment at 56 to 71 (CQRCHSFSDEAVCPLC) adopts a C4-type zinc-finger fold. The Toprim domain maps to 79 to 174 (TLLCVVETAA…KVTRLAQGVP (96 aa)).

Belongs to the RecR family.

Its function is as follows. May play a role in DNA repair. It seems to be involved in an RecBC-independent recombinational process of DNA repair. It may act with RecF and RecO. This chain is Recombination protein RecR, found in Psychrobacter cryohalolentis (strain ATCC BAA-1226 / DSM 17306 / VKM B-2378 / K5).